We begin with the raw amino-acid sequence, 861 residues long: Translation initiation factor IF-2 (861 aa).

2 disordered regions span residues 1–69 (MSDA…GESA) and 92–273 (ARAR…GREK). Positions 53–65 (GGPGGKQGGGAKG) are enriched in gly residues. Positions 94–108 (ARAEAADREAQKKQD) are enriched in basic and acidic residues. Low complexity predominate over residues 109–120 (AAAMAQRAASEQ). Basic and acidic residues-rich tracts occupy residues 121–155 (RQLE…KAEA) and 163–186 (DSGR…KRTP). A compositionally biased stretch (low complexity) spans 213 to 223 (PGPAAKQQPAR). Over residues 255–273 (RAREREKQRRQDTSGGREK) the composition is skewed to basic and acidic residues. The 171-residue stretch at 357-527 (PRAPVIAVMG…ALQAELLDLK (171 aa)) folds into the tr-type G domain. Residues 366 to 373 (GHVDHGKT) are G1. 366–373 (GHVDHGKT) contributes to the GTP binding site. Residues 391–395 (GITQH) are G2. The interval 413-416 (DTPG) is G3. GTP contacts are provided by residues 413–417 (DTPGH) and 467–470 (NKCD). The segment at 467–470 (NKCD) is G4. The tract at residues 503–505 (SAK) is G5.

The protein belongs to the TRAFAC class translation factor GTPase superfamily. Classic translation factor GTPase family. IF-2 subfamily.

The protein resides in the cytoplasm. In terms of biological role, one of the essential components for the initiation of protein synthesis. Protects formylmethionyl-tRNA from spontaneous hydrolysis and promotes its binding to the 30S ribosomal subunits. Also involved in the hydrolysis of GTP during the formation of the 70S ribosomal complex. The sequence is that of Translation initiation factor IF-2 from Maricaulis maris (strain MCS10) (Caulobacter maris).